Here is a 247-residue protein sequence, read N- to C-terminus: Adenosylcobinamide-GDP ribazoletransferase (247 aa).

6 consecutive transmembrane segments (helical) span residues 34-54, 59-79, 113-133, 138-158, 171-193, and 197-219; these read IVMFPFIGLILGGVSGLIFIL, CGIPLAALFCILALALLTGGF, GGLALIFVLLAKILVVSELAL, MLAALAAACAAGRGSAVLLMY, VFIGKVSGRQTCITLGLAIIIAT, and PGMQGLAAMVVTCAAIFILGQLL.

It belongs to the CobS family. Mg(2+) is required as a cofactor.

It localises to the cell inner membrane. The catalysed reaction is alpha-ribazole + adenosylcob(III)inamide-GDP = adenosylcob(III)alamin + GMP + H(+). It carries out the reaction alpha-ribazole 5'-phosphate + adenosylcob(III)inamide-GDP = adenosylcob(III)alamin 5'-phosphate + GMP + H(+). It participates in cofactor biosynthesis; adenosylcobalamin biosynthesis; adenosylcobalamin from cob(II)yrinate a,c-diamide: step 7/7. Its function is as follows. Joins adenosylcobinamide-GDP and alpha-ribazole to generate adenosylcobalamin (Ado-cobalamin). Also synthesizes adenosylcobalamin 5'-phosphate from adenosylcobinamide-GDP and alpha-ribazole 5'-phosphate. The chain is Adenosylcobinamide-GDP ribazoletransferase from Salmonella newport (strain SL254).